The chain runs to 366 residues: Mitogen-activated protein kinase 13 (366 aa).

Residues 25-308 enclose the Protein kinase domain; the sequence is YVSLTHIGSG…ASQALAHPFF (284 aa). 31–39 is an ATP binding site; sequence IGSGAYGSV. Residue Ser-47 is modified to Phosphoserine. Lys-54 lines the ATP pocket. Asp-150 functions as the Proton acceptor in the catalytic mechanism. The residue at position 180 (Thr-180) is a Phosphothreonine; by MAP2K3, MAP2K4, MAP2K6 and MAP2K7. A TXY motif is present at residues 180–182; it reads TGY. At Tyr-182 the chain carries Phosphotyrosine; by MAP2K3, MAP2K4, MAP2K6 and MAP2K7. A Phosphoserine modification is found at Ser-350.

This sequence belongs to the protein kinase superfamily. CMGC Ser/Thr protein kinase family. MAP kinase subfamily. Interacts with MAPK8IP2. Mg(2+) serves as cofactor. Dually phosphorylated on Thr-180 and Tyr-182 by MAP2K3/MKK3, MAP2K4/MKK4, MAP2K6/MKK6 and MAP2K7/MKK7, which activates the enzyme. Dephosphorylated by dual specificity phosphatase DUSP1.

It catalyses the reaction L-seryl-[protein] + ATP = O-phospho-L-seryl-[protein] + ADP + H(+). The catalysed reaction is L-threonyl-[protein] + ATP = O-phospho-L-threonyl-[protein] + ADP + H(+). With respect to regulation, activated by phosphorylation on threonine and tyrosine by dual specificity kinases, MAP2K3/MKK3 MAP2K6/MKK6, MAP2K4/MKK4 and MAP2K7/MKK7. Activation by ultraviolet radiation, hyperosmotic shock, anisomycin or by TNF-alpha is mediated by MAP2K3/MKK3. Inhibited by dual specificity phosphatase DUSP1. Its function is as follows. Serine/threonine kinase which acts as an essential component of the MAP kinase signal transduction pathway. MAPK13 is one of the four p38 MAPKs which play an important role in the cascades of cellular responses evoked by extracellular stimuli such as pro-inflammatory cytokines or physical stress leading to direct activation of transcription factors such as ELK1 and ATF2. Accordingly, p38 MAPKs phosphorylate a broad range of proteins and it has been estimated that they may have approximately 200 to 300 substrates each. MAPK13 is one of the less studied p38 MAPK isoforms. Some of the targets are downstream kinases such as MAPKAPK2, which are activated through phosphorylation and further phosphorylate additional targets. Plays a role in the regulation of protein translation by phosphorylating and inactivating EEF2K. Involved in cytoskeletal remodeling through phosphorylation of MAPT and STMN1. Mediates UV irradiation induced up-regulation of the gene expression of CXCL14. Plays an important role in the regulation of epidermal keratinocyte differentiation, apoptosis and skin tumor development. Phosphorylates the transcriptional activator MYB in response to stress which leads to rapid MYB degradation via a proteasome-dependent pathway. MAPK13 also phosphorylates and down-regulates PRKD1 during regulation of insulin secretion in pancreatic beta cells. This Bos taurus (Bovine) protein is Mitogen-activated protein kinase 13 (MAPK13).